Here is a 549-residue protein sequence, read N- to C-terminus: uncharacterized protein (549 aa).

The next 12 helical transmembrane spans lie at 1 to 21, 28 to 48, 50 to 70, 85 to 105, 106 to 126, 165 to 185, 187 to 207, 222 to 242, 278 to 298, 310 to 330, 361 to 381, and 398 to 418; these read MEIF…GVVT, IPLP…TFGL, VEFD…FADG, IFGL…FLIY, WVVP…LSPT, FAVA…TVEF, KVAI…GRSL, IVLL…IGVS, LEFV…PGIL, NVEI…LMLV, ILIA…VLSI, and VFLA…MLPI.

The protein belongs to the monovalent cation:proton antiporter 1 (CPA1) transporter (TC 2.A.36) family.

It localises to the cell inner membrane. This is an uncharacterized protein from Escherichia coli (strain K12).